Reading from the N-terminus, the 245-residue chain is tRNA (guanine-N(1)-)-methyltransferase (245 aa).

Residues Gly111 and 131 to 136 each bind S-adenosyl-L-methionine; that span reads IGDYVL.

This sequence belongs to the RNA methyltransferase TrmD family. In terms of assembly, homodimer.

It localises to the cytoplasm. The enzyme catalyses guanosine(37) in tRNA + S-adenosyl-L-methionine = N(1)-methylguanosine(37) in tRNA + S-adenosyl-L-homocysteine + H(+). Specifically methylates guanosine-37 in various tRNAs. In Staphylococcus carnosus (strain TM300), this protein is tRNA (guanine-N(1)-)-methyltransferase.